Reading from the N-terminus, the 296-residue chain is 33 kDa chaperonin (296 aa).

Intrachain disulfides connect cysteine 238/cysteine 240 and cysteine 271/cysteine 274.

It belongs to the HSP33 family. Post-translationally, under oxidizing conditions two disulfide bonds are formed involving the reactive cysteines. Under reducing conditions zinc is bound to the reactive cysteines and the protein is inactive.

It localises to the cytoplasm. In terms of biological role, redox regulated molecular chaperone. Protects both thermally unfolding and oxidatively damaged proteins from irreversible aggregation. Plays an important role in the bacterial defense system toward oxidative stress. This is 33 kDa chaperonin from Clostridium botulinum (strain 657 / Type Ba4).